We begin with the raw amino-acid sequence, 502 residues long: Glycerol kinase (502 aa).

Thr14 is a binding site for ADP. Residues Thr14, Thr15, and Ser16 each coordinate ATP. Thr14 is a binding site for sn-glycerol 3-phosphate. Residue Arg18 coordinates ADP. The sn-glycerol 3-phosphate site is built by Arg84, Glu85, Tyr136, and Asp246. Residues Arg84, Glu85, Tyr136, Asp246, and Gln247 each contribute to the glycerol site. Residues Thr268 and Gly311 each contribute to the ADP site. The ATP site is built by Thr268, Gly311, Gln315, and Gly412. 2 residues coordinate ADP: Gly412 and Asn416.

Belongs to the FGGY kinase family. Homotetramer and homodimer (in equilibrium). Heterodimer with EIIA-Glc. Binds 1 zinc ion per glycerol kinase EIIA-Glc dimer. The zinc ion is important for dimerization.

The catalysed reaction is glycerol + ATP = sn-glycerol 3-phosphate + ADP + H(+). Its pathway is polyol metabolism; glycerol degradation via glycerol kinase pathway; sn-glycerol 3-phosphate from glycerol: step 1/1. With respect to regulation, activity of this regulatory enzyme is affected by several metabolites. Allosterically and non-competitively inhibited by fructose 1,6-bisphosphate (FBP) and unphosphorylated phosphocarrier protein EIIA-Glc (III-Glc), an integral component of the bacterial phosphotransferase (PTS) system. Key enzyme in the regulation of glycerol uptake and metabolism. Catalyzes the phosphorylation of glycerol to yield sn-glycerol 3-phosphate. This Escherichia fergusonii (strain ATCC 35469 / DSM 13698 / CCUG 18766 / IAM 14443 / JCM 21226 / LMG 7866 / NBRC 102419 / NCTC 12128 / CDC 0568-73) protein is Glycerol kinase.